Consider the following 555-residue polypeptide: Membrane protein insertase YidC (555 aa).

A helical membrane pass occupies residues 7–24; the sequence is ILWVIFSMSLVLLYDNWQ. Positions 62–81 are disordered; it reads APGAAGTAAPAAPQAAAQPT. Transmembrane regions (helical) follow at residues 334 to 354, 360 to 380, 430 to 450, 468 to 488, and 503 to 523; these read LELVKDYGWLTILAKPLFWLL, FLGNWGWSIIALTVLIKLVFF, LGGCLPIVIQIPVFIALYWVL, LSVPDPFYILPIVMAVSMFVQ, and VMMIMPLVFSVMFFFFPAGLV.

It belongs to the OXA1/ALB3/YidC family. Type 1 subfamily. As to quaternary structure, interacts with the Sec translocase complex via SecD. Specifically interacts with transmembrane segments of nascent integral membrane proteins during membrane integration.

The protein localises to the cell inner membrane. Functionally, required for the insertion and/or proper folding and/or complex formation of integral membrane proteins into the membrane. Involved in integration of membrane proteins that insert both dependently and independently of the Sec translocase complex, as well as at least some lipoproteins. Aids folding of multispanning membrane proteins. The sequence is that of Membrane protein insertase YidC from Cupriavidus necator (strain ATCC 17699 / DSM 428 / KCTC 22496 / NCIMB 10442 / H16 / Stanier 337) (Ralstonia eutropha).